A 447-amino-acid chain; its full sequence is Putative metabolite transport protein HI_0418 (447 aa).

The Cytoplasmic segment spans residues 1-28; sequence MCKPQQKHYGRQVMNTQNSLKQVATATM. A helical membrane pass occupies residues 29–49; that stretch reads VGTAIEYFDNYIYAMAAVLVF. The Periplasmic segment spans residues 50–63; the sequence is NHQFFHAVDPLSGQ. Residues 64–84 form a helical membrane-spanning segment; the sequence is IAALSTLALTFIARPLGAILF. Over 85–96 the chain is Cytoplasmic; it reads GHFGDRFGRKNT. Residues 97–117 traverse the membrane as a helical segment; it reads FVMSLLLMGISTVVIGLLPTY. Over 118–119 the chain is Periplasmic; that stretch reads DS. The helical transmembrane segment at 120-140 threads the bilayer; sequence IGIWATILLCLCRIGQGIGLG. Over 141-167 the chain is Cytoplasmic; it reads GEWGGAALVAVENAPEGKRGWYGTFPQ. Residues 168–188 traverse the membrane as a helical segment; the sequence is LGAPLGLLLANGVFLGITAIF. The Periplasmic portion of the chain corresponds to 189 to 194; that stretch reads GQEAMT. Residues 195 to 215 form a helical membrane-spanning segment; it reads EWAWRIPFLSSVILVAIGLYV. Residues 216–249 lie on the Cytoplasmic side of the membrane; that stretch reads RLKLTEAPIFLAALNKPKPKRLPMLEVVTTHFKP. Residues 250–270 traverse the membrane as a helical segment; it reads FFLGMLVCIAGYVLFYIMIAF. Over 271–295 the chain is Periplasmic; that stretch reads SQIYAKSAPTVSEAGYAMGLGFSPQ. Residues 296–316 form a helical membrane-spanning segment; it reads IFTALLMASAVSLAITIAASG. At 317-325 the chain is on the cytoplasmic side; that stretch reads KYIDKIGRR. Residues 326 to 346 traverse the membrane as a helical segment; it reads TWLIWTTVGVAIFGLSLPLFL. Topologically, residues 347–354 are periplasmic; it reads ENGTTTSL. Residues 355-375 traverse the membrane as a helical segment; the sequence is FWFLFIGMGLIGMGYGPLASF. Residues 376-390 lie on the Cytoplasmic side of the membrane; the sequence is LPELFPTHARYSGAS. Residues 391–411 traverse the membrane as a helical segment; the sequence is LTYNIAGLFGASVAAIIALPL. The Periplasmic segment spans residues 412–418; that stretch reads NAHYGLK. A helical transmembrane segment spans residues 419–439; it reads GVGIYLTLNAVLSLVGLWFIS. Residues 440–447 lie on the Cytoplasmic side of the membrane; that stretch reads ETKDKLLS.

Belongs to the major facilitator superfamily. Metabolite:H+ Symporter (MHS) family (TC 2.A.1.6) family.

The protein localises to the cell inner membrane. This is Putative metabolite transport protein HI_0418 from Haemophilus influenzae (strain ATCC 51907 / DSM 11121 / KW20 / Rd).